Here is a 114-residue protein sequence, read N- to C-terminus: Photosystem II reaction center Psb28 protein (114 aa).

It belongs to the Psb28 family. Part of the photosystem II complex.

Its subcellular location is the plastid. It localises to the chloroplast thylakoid membrane. The sequence is that of Photosystem II reaction center Psb28 protein from Thalassiosira pseudonana (Marine diatom).